The sequence spans 54 residues: Ovomucoid (54 aa).

The Kazal-like domain occupies 4–54; it reads VDCSDYPKPVCPLDYMPLCGSDSKTYSNKCNFCNAVVESSGTLTLRHFGKC. Cystine bridges form between Cys-6/Cys-36, Cys-14/Cys-33, and Cys-22/Cys-54.

This is the only ovomucoid third domain known to be not glycosylated.

The protein resides in the secreted. The chain is Ovomucoid from Struthio camelus (Common ostrich).